The following is a 59-amino-acid chain: UPF0434 protein Noc_2677 (59 aa).

Belongs to the UPF0434 family.

The sequence is that of UPF0434 protein Noc_2677 from Nitrosococcus oceani (strain ATCC 19707 / BCRC 17464 / JCM 30415 / NCIMB 11848 / C-107).